Here is a 237-residue protein sequence, read N- to C-terminus: Large ribosomal subunit protein uL3 (237 aa).

Disordered stretches follow at residues 133–155 (ASHGNSITHRSHGSTGQRQDPGK) and 213–237 (PENAPKPAGLRAGAKAEAAATEGGE). A compositionally biased stretch (polar residues) spans 135–150 (HGNSITHRSHGSTGQR). Position 151 is an N5-methylglutamine (Gln151). Residues 220–237 (AGLRAGAKAEAAATEGGE) show a composition bias toward low complexity.

Belongs to the universal ribosomal protein uL3 family. As to quaternary structure, part of the 50S ribosomal subunit. Forms a cluster with proteins L14 and L19. In terms of processing, methylated by PrmB.

In terms of biological role, one of the primary rRNA binding proteins, it binds directly near the 3'-end of the 23S rRNA, where it nucleates assembly of the 50S subunit. The polypeptide is Large ribosomal subunit protein uL3 (Brucella abortus (strain S19)).